Here is a 184-residue protein sequence, read N- to C-terminus: Guanylate kinase (184 aa).

The Guanylate kinase-like domain maps to 4–182 (MGLTVLSGPS…AAARLVALMI (179 aa)). An ATP-binding site is contributed by 11 to 18 (GPSGVGKD).

This sequence belongs to the guanylate kinase family.

It localises to the cytoplasm. The catalysed reaction is GMP + ATP = GDP + ADP. Functionally, essential for recycling GMP and indirectly, cGMP. The chain is Guanylate kinase from Frankia casuarinae (strain DSM 45818 / CECT 9043 / HFP020203 / CcI3).